The following is a 415-amino-acid chain: Tyrosine--tRNA ligase (415 aa).

Position 33 (tyrosine 33) interacts with L-tyrosine. A 'HIGH' region motif is present at residues 38-47 (PSGESLHLGN). Tyrosine 161 and glutamine 165 together coordinate L-tyrosine. The short motif at 225 to 229 (KFGKS) is the 'KMSKS' region element. Residue lysine 228 participates in ATP binding. Residues 350–414 (MVIDFLLQAK…KKNYFIVVWK (65 aa)) enclose the S4 RNA-binding domain.

This sequence belongs to the class-I aminoacyl-tRNA synthetase family. TyrS type 1 subfamily. Homodimer.

The protein localises to the cytoplasm. The catalysed reaction is tRNA(Tyr) + L-tyrosine + ATP = L-tyrosyl-tRNA(Tyr) + AMP + diphosphate + H(+). Catalyzes the attachment of tyrosine to tRNA(Tyr) in a two-step reaction: tyrosine is first activated by ATP to form Tyr-AMP and then transferred to the acceptor end of tRNA(Tyr). This chain is Tyrosine--tRNA ligase, found in Mycoplasmoides gallisepticum (strain R(low / passage 15 / clone 2)) (Mycoplasma gallisepticum).